Consider the following 242-residue polypeptide: Octanoyltransferase (242 aa).

The region spanning 31–206 is the BPL/LPL catalytic domain; the sequence is SQTTDEIWFL…LFLKNFGYNQ (176 aa). Substrate contacts are provided by residues 70–77, 137–139, and 150–152; these read RGGQVTYH, SIG, and GLA. The active-site Acyl-thioester intermediate is the Cys168.

The protein belongs to the LipB family.

The protein localises to the cytoplasm. It carries out the reaction octanoyl-[ACP] + L-lysyl-[protein] = N(6)-octanoyl-L-lysyl-[protein] + holo-[ACP] + H(+). Its pathway is protein modification; protein lipoylation via endogenous pathway; protein N(6)-(lipoyl)lysine from octanoyl-[acyl-carrier-protein]: step 1/2. In terms of biological role, catalyzes the transfer of endogenously produced octanoic acid from octanoyl-acyl-carrier-protein onto the lipoyl domains of lipoate-dependent enzymes. Lipoyl-ACP can also act as a substrate although octanoyl-ACP is likely to be the physiological substrate. The sequence is that of Octanoyltransferase from Coxiella burnetii (strain CbuG_Q212) (Coxiella burnetii (strain Q212)).